A 276-amino-acid chain; its full sequence is MESTIGIDAGGTLTKIAYLNEKKKLTFEKFYSNEQDKIIDWLKKQTSIKQICITGGKAKQLQQLLSDSYKIVELNEFEATLVGVRYILKEEKYDINNFVLTNIGTGTSIHYIYNDRYIRAGGTGVGGGTIMGLSKLLTNIDHFEDVIPLTKVGSRKDLDITVGDIYGGILSPIDNSLTASNFGKAATIESNYNNSDILATVQGLVGEVVTALSLQFAETKNIGHIIYIGSTLCNNIHLQNIISSYTKYQNKTPIFLRDGGNSGAIGALLYATNKKS.

Position 8 to 15 (8 to 15 (DAGGTLTK)) interacts with ATP. Residue E76 is the Proton acceptor of the active site. ATP contacts are provided by residues T105, 127-131 (GGTIM), F143, and S230.

This sequence belongs to the type II pantothenate kinase family. In terms of assembly, homodimer.

Its subcellular location is the cytoplasm. It carries out the reaction (R)-pantothenate + ATP = (R)-4'-phosphopantothenate + ADP + H(+). The protein operates within cofactor biosynthesis; coenzyme A biosynthesis; CoA from (R)-pantothenate: step 1/5. In terms of biological role, catalyzes the phosphorylation of pantothenate (Pan), the first step in CoA biosynthesis. This is Type II pantothenate kinase from Bacillus cereus (strain AH820).